The primary structure comprises 262 residues: uncharacterized protein (262 aa).

H7, H9, E96, H132, H156, and D211 together coordinate a divalent metal cation.

The protein belongs to the metallo-dependent hydrolases superfamily. TatD-type hydrolase family. It depends on a divalent metal cation as a cofactor.

This is an uncharacterized protein from Mycoplasma genitalium (strain ATCC 33530 / DSM 19775 / NCTC 10195 / G37) (Mycoplasmoides genitalium).